A 308-amino-acid polypeptide reads, in one-letter code: uncharacterized protein (308 aa).

This is an uncharacterized protein from Mycoplasmoides gallisepticum (strain R(low / passage 15 / clone 2)) (Mycoplasma gallisepticum).